Here is a 430-residue protein sequence, read N- to C-terminus: Ribosomal protein uS12 methylthiotransferase RimO (430 aa).

The MTTase N-terminal domain occupies 1–116 (MRVGIKVLGC…IANAIENGTD (116 aa)). The [4Fe-4S] cluster site is built by Cys-10, Cys-46, Cys-79, Cys-148, Cys-152, and Cys-155. In terms of domain architecture, Radical SAM core spans 134–365 (LEERPYAYVK…LLQAEISNSR (232 aa)). The 64-residue stretch at 367–430 (DRFVGKKLKF…DEYDMWGSVI (64 aa)) folds into the TRAM domain.

This sequence belongs to the methylthiotransferase family. RimO subfamily. [4Fe-4S] cluster is required as a cofactor.

It localises to the cytoplasm. It catalyses the reaction L-aspartate(89)-[ribosomal protein uS12]-hydrogen + (sulfur carrier)-SH + AH2 + 2 S-adenosyl-L-methionine = 3-methylsulfanyl-L-aspartate(89)-[ribosomal protein uS12]-hydrogen + (sulfur carrier)-H + 5'-deoxyadenosine + L-methionine + A + S-adenosyl-L-homocysteine + 2 H(+). Functionally, catalyzes the methylthiolation of an aspartic acid residue of ribosomal protein uS12. This Thermotoga petrophila (strain ATCC BAA-488 / DSM 13995 / JCM 10881 / RKU-1) protein is Ribosomal protein uS12 methylthiotransferase RimO.